The sequence spans 197 residues: Ribosome maturation factor RimP (197 aa).

Belongs to the RimP family.

It localises to the cytoplasm. Functionally, required for maturation of 30S ribosomal subunits. The sequence is that of Ribosome maturation factor RimP from Acidovorax sp. (strain JS42).